The chain runs to 202 residues: MATNITWHPNLTYDERKELRKQDGCTVWLTGLSASGKSTIACALEQLLLQKNLSAYRLDGDNIRFGLNKDLGFSEKDRNENIRRISEVSKLFADSCAVSITSFISPYRVDRDRARDLHKEAGLKFIEIFVDVPLEVAEQRDPKGLYKKAREGVIKEFTGISAPYEAPKAPELHLRTDQKTVEECAAIIYEYLVNEKIIRKHL.

G31–S38 contacts ATP. Catalysis depends on S105, which acts as the Phosphoserine intermediate.

It belongs to the APS kinase family.

The catalysed reaction is adenosine 5'-phosphosulfate + ATP = 3'-phosphoadenylyl sulfate + ADP + H(+). It participates in sulfur metabolism; hydrogen sulfide biosynthesis; sulfite from sulfate: step 2/3. Functionally, catalyzes the synthesis of activated sulfate. The sequence is that of Adenylyl-sulfate kinase (MET14) from Saccharomyces pastorianus (Lager yeast).